The following is a 366-amino-acid chain: MASVTEQFNDIISLYSTKLEHTSLRQDSPEYQGLLLSTIKKLLNLKTAIFDRLALFSTNETIDDVSTASIKFLAVDYYLGLLISRRQSNDSDVAQRQSMKLIYLKKSVESFINFLTLLQDYKLLDPLVGEKLGNFKDRYNPQLSELYAQPKNNKDLSGAQLKRKEKIELFQRNKEISTKLHCLELELKNNDEDHDHDELLRELYLMRLHHFSLDTINNIEQNLFECEMLSNFLKNSVHEVKSSGTQIRKESNDDDSTGFTDKLENINKPLIDKKGQVLRNFTLVDKRQQLQQKVRGYGQYGPTMSVEEFLDKEFEEGRVLQGGEEPEQAPDEENMDWQDRETYKAREWDEFKESHAKGSGNTMNRG.

The disordered stretch occupies residues 318 to 366 (RVLQGGEEPEQAPDEENMDWQDRETYKAREWDEFKESHAKGSGNTMNRG). A compositionally biased stretch (acidic residues) spans 324–336 (EEPEQAPDEENMD). Over residues 337–356 (WQDRETYKAREWDEFKESHA) the composition is skewed to basic and acidic residues.

It belongs to the IGBP1/TAP42 family. Associates with the PP2a (PPH21 and PPH22) and SIT4 protein phosphatase catalytic subunits. Interacts with PPG1, PPH3 and TIP41. In terms of processing, phosphorylated by TOR kinases. Dephosphorylated by CDC55, TPD3 and SIT4.

Involved in negative regulation of the TOR signaling pathway in response to type of available nitrogen source. Inhibitor of PP2A phosphatase SIT4, which results in inhibition of nuclear export of MSN2, due to lack of dephosphorylation by SIT4. Also required for rapamycin induced activation of expression of many nitrogen discrimination pathway (NDP) genes. In complex with PPH21, required for organization of the actin cytoskeletom during the cell cycle via a Rho GTPase-dependent mechanism. The chain is Type 2A phosphatase-associated protein 42 (TAP42) from Saccharomyces cerevisiae (strain ATCC 204508 / S288c) (Baker's yeast).